The primary structure comprises 227 residues: uncharacterized protein (227 aa).

This is an uncharacterized protein from Ictalurid herpesvirus 1 (strain Auburn) (IcHV-1).